Here is a 236-residue protein sequence, read N- to C-terminus: Ubiquinone biosynthesis O-methyltransferase (236 aa).

Positions 39, 59, 80, and 124 each coordinate S-adenosyl-L-methionine.

This sequence belongs to the methyltransferase superfamily. UbiG/COQ3 family.

It carries out the reaction a 3-demethylubiquinol + S-adenosyl-L-methionine = a ubiquinol + S-adenosyl-L-homocysteine + H(+). The catalysed reaction is a 3-(all-trans-polyprenyl)benzene-1,2-diol + S-adenosyl-L-methionine = a 2-methoxy-6-(all-trans-polyprenyl)phenol + S-adenosyl-L-homocysteine + H(+). Its pathway is cofactor biosynthesis; ubiquinone biosynthesis. Its function is as follows. O-methyltransferase that catalyzes the 2 O-methylation steps in the ubiquinone biosynthetic pathway. This is Ubiquinone biosynthesis O-methyltransferase from Shewanella sp. (strain MR-7).